Here is a 111-residue protein sequence, read N- to C-terminus: Probable 4-amino-4-deoxy-L-arabinose-phosphoundecaprenol flippase subunit ArnE (111 aa).

Helical transmembrane passes span 38–58, 61–81, and 91–111; these read LWLG…LLVL, LPVG…TLAA, and PRHW…GSAA. The 70-residue stretch at 40–109 folds into the EamA domain; sequence LGLALICMGA…IISGIIILGS (70 aa).

The protein belongs to the ArnE family. As to quaternary structure, heterodimer of ArnE and ArnF.

The protein resides in the cell inner membrane. Its pathway is bacterial outer membrane biogenesis; lipopolysaccharide biosynthesis. In terms of biological role, translocates 4-amino-4-deoxy-L-arabinose-phosphoundecaprenol (alpha-L-Ara4N-phosphoundecaprenol) from the cytoplasmic to the periplasmic side of the inner membrane. This Salmonella heidelberg (strain SL476) protein is Probable 4-amino-4-deoxy-L-arabinose-phosphoundecaprenol flippase subunit ArnE.